A 2968-amino-acid polypeptide reads, in one-letter code: Polyketide synthase 37 (2968 aa).

The 423-residue stretch at Lys-32–Ser-454 folds into the Ketosynthase family 3 (KS3) domain. Catalysis depends on for beta-ketoacyl synthase activity residues Cys-198, His-338, and His-378. The interval Phe-624–Ser-950 is malonyl-CoA:ACP transacylase (MAT) domain. Residue Ser-718 is the For malonyltransferase activity of the active site. An N-terminal hotdog fold region spans residues Pro-1017 to Leu-1157. One can recognise a PKS/mFAS DH domain in the interval Pro-1017–Ser-1350. The dehydratase (DH) domain stretch occupies residues Thr-1031–Asn-1345. His-1049 functions as the Proton acceptor; for dehydratase activity in the catalytic mechanism. The interval Phe-1183–Ser-1350 is C-terminal hotdog fold. Asp-1257 serves as the catalytic Proton donor; for dehydratase activity. A disordered region spans residues Ser-1522–Gly-1547. Positions Thr-1530 to Gly-1547 are enriched in low complexity. The interval Gly-1718 to Ile-2053 is enoyl reductase (ER) domain. A ketoreductase (KR) domain region spans residues Thr-2083–Ser-2277. Residues Gly-2379 to Gly-2400 are disordered. The Carrier domain maps to Phe-2421–Leu-2498. At Ser-2458 the chain carries O-(pantetheine 4'-phosphoryl)serine. A disordered region spans residues Ser-2568 to Arg-2589. Positions Ile-2707–Lys-2968 are chalcone synthase. The active site involves Cys-2747.

Pantetheine 4'-phosphate serves as cofactor.

It catalyses the reaction (E)-4-coumaroyl-CoA + 3 malonyl-CoA + 3 H(+) = 2',4,4',6'-tetrahydroxychalcone + 3 CO2 + 4 CoA. The catalysed reaction is hexanoyl-CoA + 3 malonyl-CoA + 3 H(+) = 2,4,6-trihydroxyphenylhexan-1-one + 3 CO2 + 4 CoA. It functions in the pathway secondary metabolite biosynthesis; flavonoid biosynthesis. Its function is as follows. Polyketide synthase; part of the gene cluster that mediates the biosynthesis of DIF-1 (Differentiation Inducing Factor-1), a signal molecule involved in the differentiation of pstO (prestalk-O) cells. The three-step process begins with the formation of (2,4,6-trihydroxyphenyl)-1-hexan-1-one (THPH) by the polyketide synthase StlB. THPH is then dichlorinated by the flavin-dependent halogenase ChlA. The last step of DIF-1 biosynthesis is the O-methylation of dichloro-THPH (or des-methyl-DIF-1) by the methyltransferase DmtA to yield DIF-1. In Dictyostelium discoideum (Social amoeba), this protein is Polyketide synthase 37 (StlB).